Reading from the N-terminus, the 438-residue chain is Probable glucose-6-phosphate isomerase (438 aa).

Residue glutamate 280 is the Proton donor of the active site. Catalysis depends on residues histidine 301 and lysine 410.

The protein belongs to the GPI family.

The protein resides in the cytoplasm. It carries out the reaction alpha-D-glucose 6-phosphate = beta-D-fructose 6-phosphate. Its pathway is carbohydrate biosynthesis; gluconeogenesis. It functions in the pathway carbohydrate degradation; glycolysis; D-glyceraldehyde 3-phosphate and glycerone phosphate from D-glucose: step 2/4. In terms of biological role, catalyzes the reversible isomerization of glucose-6-phosphate to fructose-6-phosphate. This chain is Probable glucose-6-phosphate isomerase, found in Methanococcus maripaludis (strain DSM 14266 / JCM 13030 / NBRC 101832 / S2 / LL).